Reading from the N-terminus, the 575-residue chain is Methionine--tRNA ligase, mitochondrial (575 aa).

The 'HIGH' region signature appears at 20–32; the sequence is PIFYPNAKPHLGH. The 'KMSKS' region signature appears at 341 to 345; that stretch reads KMSKS. Lys-344 serves as a coordination point for ATP.

This sequence belongs to the class-I aminoacyl-tRNA synthetase family.

It localises to the mitochondrion matrix. The catalysed reaction is tRNA(Met) + L-methionine + ATP = L-methionyl-tRNA(Met) + AMP + diphosphate. Functionally, catalyzes the attachment of methionine to tRNA(Met) in the mitochondrion. In Saccharomyces cerevisiae (strain ATCC 204508 / S288c) (Baker's yeast), this protein is Methionine--tRNA ligase, mitochondrial (MSM1).